A 520-amino-acid chain; its full sequence is MSNISTDLQDVEKIIVLDYGSQYNQLISRRIRDIGVFSELKSHKISAAEVREVNPVGIILSGGPNSVYEDGSFDIDPEIFELGIPILGICYGMQLLTHKLGGKVVPAGDAGNREYGQSTLTHTPSALFESTPDEQTVLMSHGDAVTEIPADFVRTGTSADCPYAAIENPDKHIYGIQFHPEVRHSVYGNDILRNFALNICKAKGDWSMDNFIDMQIKKIRETVGDKRVLLGLSGGVDSSVVGVLLQKAIGDQLICIFVDHGLLRKGEADQVMDMLGGKFGLNIVKADAAKRFLDKLAGVSDPEQKRKIIGNEFVYVFDDEASKLKDVKFLAQGTLYTDVIESGTDTAQTIKSHHNVGGLPEDMQFELIEPLNTLYKDEVRALGTELGMPDHIVWRQPFPGPGLAIRVMGEITEEKLETVRESDAILREEIAKAGLDRDIWQYFTVNTGVRSVGVMGDGRTYDYTIAIRAITSIDGMTADFAKIPWEVLQKISVRIVNEVDHVNRIVYDITSKPPATVEWE.

The Glutamine amidotransferase type-1 domain maps to 13-205; the sequence is KIIVLDYGSQ…ALNICKAKGD (193 aa). Cys90 functions as the Nucleophile in the catalytic mechanism. Residues His179 and Glu181 contribute to the active site. A GMPS ATP-PPase domain is found at 206 to 395; the sequence is WSMDNFIDMQ…LGMPDHIVWR (190 aa). 233-239 contributes to the ATP binding site; sequence SGGVDSS.

Homodimer.

It catalyses the reaction XMP + L-glutamine + ATP + H2O = GMP + L-glutamate + AMP + diphosphate + 2 H(+). It functions in the pathway purine metabolism; GMP biosynthesis; GMP from XMP (L-Gln route): step 1/1. Its function is as follows. Catalyzes the synthesis of GMP from XMP. The polypeptide is GMP synthase [glutamine-hydrolyzing] (Streptococcus pneumoniae (strain P1031)).